A 243-amino-acid chain; its full sequence is Urease accessory protein UreF (243 aa).

This sequence belongs to the UreF family. As to quaternary structure, ureD, UreF and UreG form a complex that acts as a GTP-hydrolysis-dependent molecular chaperone, activating the urease apoprotein by helping to assemble the nickel containing metallocenter of UreC. The UreE protein probably delivers the nickel.

The protein resides in the cytoplasm. Functionally, required for maturation of urease via the functional incorporation of the urease nickel metallocenter. In Rhodopseudomonas palustris (strain BisB5), this protein is Urease accessory protein UreF.